We begin with the raw amino-acid sequence, 520 residues long: Keratin, type II cytoskeletal 72 (520 aa).

The tract at residues 1–133 is head; that stretch reads MSRQLTLYPG…DPEIQKVRAQ (133 aa). Positions 134–169 are coil 1A; the sequence is EREQIKALNNKFASFIDKVRFLEQQNQVLETKWELL. The IF rod domain maps to 134–447; that stretch reads EREQIKALNN…KLLESEESRM (314 aa). The segment at 170 to 188 is linker 1; it reads QQLDLNNSKRSLEPVHESY. A coil 1B region spans residues 189 to 280; it reads ISNLQKQLEI…VLFEGEIAQM (92 aa). The linker 12 stretch occupies residues 281–304; that stretch reads QSHISDTSVILSMDNNRQLDLDSI. A coil 2 region spans residues 305–443; that stretch reads LAEVRAQYEE…ATYRKLLESE (139 aa). A tail region spans residues 444–520; the sequence is ESRMAGEYPN…SSGTTKKTSR (77 aa). The segment at 494–520 is disordered; the sequence is KGSCGSELKDPPAKTSGSSGTTKKTSR. Residues 507-520 show a composition bias toward low complexity; sequence KTSGSSGTTKKTSR.

Belongs to the intermediate filament family. In terms of assembly, heterotetramer of two type I and two type II keratins.

Functionally, has a role in hair formation. Specific component of keratin intermediate filaments in the inner root sheath (IRS) of the hair follicle. The sequence is that of Keratin, type II cytoskeletal 72 (Krt72) from Mus musculus (Mouse).